The primary structure comprises 396 residues: Elongation factor Tu (396 aa).

In terms of domain architecture, tr-type G spans 10-206; sequence KPHCNIGTIG…AVDAYIPQPE (197 aa). The interval 19–26 is G1; the sequence is GHVDHGKT. Position 19-26 (19-26) interacts with GTP; it reads GHVDHGKT. Thr26 contributes to the Mg(2+) binding site. The interval 60-64 is G2; that stretch reads GITIS. The segment at 81-84 is G3; sequence DCPG. GTP is bound by residues 81–85 and 136–139; these read DCPGH and NKVD. The tract at residues 136–139 is G4; it reads NKVD. The interval 174 to 176 is G5; it reads SAL.

It belongs to the TRAFAC class translation factor GTPase superfamily. Classic translation factor GTPase family. EF-Tu/EF-1A subfamily. In terms of assembly, monomer.

Its subcellular location is the cytoplasm. The catalysed reaction is GTP + H2O = GDP + phosphate + H(+). Functionally, GTP hydrolase that promotes the GTP-dependent binding of aminoacyl-tRNA to the A-site of ribosomes during protein biosynthesis. This chain is Elongation factor Tu, found in Parvibaculum lavamentivorans (strain DS-1 / DSM 13023 / NCIMB 13966).